The primary structure comprises 362 residues: Chorismate synthase (362 aa).

Positions 48 and 54 each coordinate NADP(+). FMN contacts are provided by residues 131-133, 243-244, glycine 287, 302-306, and arginine 328; these read RSS, NA, and KPTSS.

It belongs to the chorismate synthase family. In terms of assembly, homotetramer. FMNH2 is required as a cofactor.

It catalyses the reaction 5-O-(1-carboxyvinyl)-3-phosphoshikimate = chorismate + phosphate. The protein operates within metabolic intermediate biosynthesis; chorismate biosynthesis; chorismate from D-erythrose 4-phosphate and phosphoenolpyruvate: step 7/7. Functionally, catalyzes the anti-1,4-elimination of the C-3 phosphate and the C-6 proR hydrogen from 5-enolpyruvylshikimate-3-phosphate (EPSP) to yield chorismate, which is the branch point compound that serves as the starting substrate for the three terminal pathways of aromatic amino acid biosynthesis. This reaction introduces a second double bond into the aromatic ring system. The polypeptide is Chorismate synthase (Rhodopseudomonas palustris (strain TIE-1)).